The primary structure comprises 277 residues: MEMO1 family protein Tpet_0837 (277 aa).

This sequence belongs to the MEMO1 family.

This Thermotoga petrophila (strain ATCC BAA-488 / DSM 13995 / JCM 10881 / RKU-1) protein is MEMO1 family protein Tpet_0837.